We begin with the raw amino-acid sequence, 365 residues long: UDP-N-acetylglucosamine--N-acetylmuramyl-(pentapeptide) pyrophosphoryl-undecaprenol N-acetylglucosamine transferase (365 aa).

Residues 12-14, asparagine 128, arginine 169, serine 195, and glutamine 296 contribute to the UDP-N-acetyl-alpha-D-glucosamine site; that span reads TGG.

It belongs to the glycosyltransferase 28 family. MurG subfamily.

It is found in the cell inner membrane. The enzyme catalyses di-trans,octa-cis-undecaprenyl diphospho-N-acetyl-alpha-D-muramoyl-L-alanyl-D-glutamyl-meso-2,6-diaminopimeloyl-D-alanyl-D-alanine + UDP-N-acetyl-alpha-D-glucosamine = di-trans,octa-cis-undecaprenyl diphospho-[N-acetyl-alpha-D-glucosaminyl-(1-&gt;4)]-N-acetyl-alpha-D-muramoyl-L-alanyl-D-glutamyl-meso-2,6-diaminopimeloyl-D-alanyl-D-alanine + UDP + H(+). The protein operates within cell wall biogenesis; peptidoglycan biosynthesis. Cell wall formation. Catalyzes the transfer of a GlcNAc subunit on undecaprenyl-pyrophosphoryl-MurNAc-pentapeptide (lipid intermediate I) to form undecaprenyl-pyrophosphoryl-MurNAc-(pentapeptide)GlcNAc (lipid intermediate II). This chain is UDP-N-acetylglucosamine--N-acetylmuramyl-(pentapeptide) pyrophosphoryl-undecaprenol N-acetylglucosamine transferase, found in Gluconobacter oxydans (strain 621H) (Gluconobacter suboxydans).